The primary structure comprises 1116 residues: Pleckstrin homology domain-containing family A member 5 (1116 aa).

An N-acetylalanine modification is found at alanine 2. A WW 1 domain is found at 10-43; it reads ISLPRSWTYGITRGGRVFFINEEAKSTTWLHPVT. Serine 55 bears the Phosphoserine mark. The WW 2 domain occupies 56–89; that stretch reads TDLPTGWEEAYTFEGARYYINHNERKVTCKHPVT. The tract at residues 140–163 is disordered; the sequence is SPVGRTSRASKKVHNFGKRSNSIK. Residues 147–156 are compositionally biased toward basic residues; that stretch reads RASKKVHNFG. The 100-residue stretch at 169–268 folds into the PH domain; that stretch reads PVVRRGWLYK…WMKAMLDAAL (100 aa). A Glycyl lysine isopeptide (Lys-Gly) (interchain with G-Cter in SUMO2) cross-link involves residue lysine 301. 2 positions are modified to phosphoserine: serine 382 and serine 410. 2 positions are modified to phosphothreonine: threonine 438 and threonine 460. The tract at residues 459–495 is disordered; the sequence is RTLPRNSKTRPESICSVTPSTHDKTLGPGAEEKRRSM. Basic and acidic residues predominate over residues 479–495; it reads THDKTLGPGAEEKRRSM. Phosphoserine occurs at positions 568, 607, 809, 855, 933, and 937. Disordered regions lie at residues 928–978 and 1025–1116; these read GASD…PATE and RNKD…FMCV. Residues 930–949 show a composition bias toward polar residues; that stretch reads SDQSPLQSPSNLRDNPFRTT. A compositionally biased stretch (basic and acidic residues) spans 952-978; the sequence is RRRDDKELDTAIRENDVKPDHETPATE. Positions 1036–1046 are enriched in polar residues; the sequence is FSPQDETQTAN. The span at 1047–1061 shows a compositional bias: basic and acidic residues; that stretch reads HKPEEHPEENTKNSV. A compositionally biased stretch (polar residues) spans 1070-1085; the sequence is SYESTPEVSRGNQTMA. Residues 1088–1101 show a composition bias toward low complexity; the sequence is SLSPSPESSASPVP.

As to expression, highly expressed in heart and kidney.

Its subcellular location is the cytoplasm. The polypeptide is Pleckstrin homology domain-containing family A member 5 (PLEKHA5) (Homo sapiens (Human)).